Reading from the N-terminus, the 173-residue chain is MARVEL domain-containing protein 1 (173 aa).

Met-1 is subject to N-acetylmethionine. At 1-29 the chain is on the cytoplasmic side; that stretch reads MLPPPPRQPPPQARAARGAVRLQRPFLRS. The MARVEL domain maps to 26 to 166; the sequence is FLRSPLGVLR…SALYGCGRRC (141 aa). The helical transmembrane segment at 30–50 threads the bilayer; sequence PLGVLRLLQLLAGAAFWITIA. At 51–59 the chain is on the extracellular side; sequence TSKYQGPVH. The helical transmembrane segment at 60–80 threads the bilayer; sequence FALFVSVLFWLLTLGLYFLTL. The Cytoplasmic portion of the chain corresponds to 81–94; the sequence is LGKHELVPVLGSRW. A helical membrane pass occupies residues 95–115; that stretch reads LMVNVAHDVLAAALYGAATGI. The Extracellular portion of the chain corresponds to 116–138; sequence MSDQMQRHSYCNLKDYPLPCAYH. A helical membrane pass occupies residues 139-159; it reads AFLAAAVCGGVCHGLYLLSAL. The Cytoplasmic segment spans residues 160–173; that stretch reads YGCGRRCQGKQEVA.

As to expression, widely expressed in normal tissues. Down-regulated in multiple primary tumors.

It localises to the cell membrane. Its subcellular location is the cytoplasm. It is found in the cytoskeleton. The protein resides in the nucleus. Its function is as follows. Microtubule-associated protein that exhibits cell cycle-dependent localization and can inhibit cell proliferation and migration. This Homo sapiens (Human) protein is MARVEL domain-containing protein 1 (MARVELD1).